The primary structure comprises 246 residues: DNA repair protein RecO (246 aa).

It belongs to the RecO family.

Involved in DNA repair and RecF pathway recombination. This chain is DNA repair protein RecO, found in Nitrosococcus oceani (strain ATCC 19707 / BCRC 17464 / JCM 30415 / NCIMB 11848 / C-107).